The chain runs to 205 residues: Holliday junction branch migration complex subunit RuvA (205 aa).

Residues 1-64 form a domain I region; the sequence is MIGRLKGILI…ENLHQLFGFA (64 aa). The tract at residues 65–143 is domain II; that stretch reads EQRDRSLFRT…NWDLPQGDML (79 aa). Positions 144 to 153 are flexible linker; the sequence is AHGEIQAIAS. Positions 153 to 205 are domain III; it reads SDNDIYAEAESALIALGYKPVDAAKMVASAAKQKPEARSEELIRIALRSLAGV.

This sequence belongs to the RuvA family. In terms of assembly, homotetramer. Forms an RuvA(8)-RuvB(12)-Holliday junction (HJ) complex. HJ DNA is sandwiched between 2 RuvA tetramers; dsDNA enters through RuvA and exits via RuvB. An RuvB hexamer assembles on each DNA strand where it exits the tetramer. Each RuvB hexamer is contacted by two RuvA subunits (via domain III) on 2 adjacent RuvB subunits; this complex drives branch migration. In the full resolvosome a probable DNA-RuvA(4)-RuvB(12)-RuvC(2) complex forms which resolves the HJ.

It is found in the cytoplasm. The RuvA-RuvB-RuvC complex processes Holliday junction (HJ) DNA during genetic recombination and DNA repair, while the RuvA-RuvB complex plays an important role in the rescue of blocked DNA replication forks via replication fork reversal (RFR). RuvA specifically binds to HJ cruciform DNA, conferring on it an open structure. The RuvB hexamer acts as an ATP-dependent pump, pulling dsDNA into and through the RuvAB complex. HJ branch migration allows RuvC to scan DNA until it finds its consensus sequence, where it cleaves and resolves the cruciform DNA. The chain is Holliday junction branch migration complex subunit RuvA from Cellvibrio japonicus (strain Ueda107) (Pseudomonas fluorescens subsp. cellulosa).